Reading from the N-terminus, the 236-residue chain is Aquaporin Z (236 aa).

2 helical membrane passes run 12 to 32 (FFGTFWLVLGGCGSAVLAAGV) and 37 to 57 (IGYAGVALAFGLTVLTMAYAV). Residues 66-68 (NPA) carry the NPA 1 motif. Transmembrane regions (helical) follow at residues 92–112 (VVGAIVAAATLASIAQGVAGF), 136–156 (AALICEIVLSAGFVFVILGAT), and 163–183 (GFAPIPIGLALTLIHLISIPV). Positions 189 to 191 (NPA) match the NPA 2 motif. A helical membrane pass occupies residues 197 to 217 (ALFVGGWALEQLWLFWLAPIA).

Belongs to the MIP/aquaporin (TC 1.A.8) family. As to quaternary structure, homotetramer.

The protein resides in the cell inner membrane. It carries out the reaction H2O(in) = H2O(out). In terms of biological role, channel that permits osmotically driven movement of water in both directions. It is involved in the osmoregulation and in the maintenance of cell turgor during volume expansion in rapidly growing cells. It mediates rapid entry or exit of water in response to abrupt changes in osmolarity. This Bordetella bronchiseptica (strain ATCC BAA-588 / NCTC 13252 / RB50) (Alcaligenes bronchisepticus) protein is Aquaporin Z.